Reading from the N-terminus, the 228-residue chain is DNA mismatch repair protein MutH (228 aa).

The protein belongs to the MutH family.

The protein localises to the cytoplasm. In terms of biological role, sequence-specific endonuclease that cleaves unmethylated GATC sequences. It is involved in DNA mismatch repair. This is DNA mismatch repair protein MutH from Yersinia pseudotuberculosis serotype O:1b (strain IP 31758).